The chain runs to 284 residues: Tropomyosin isoforms a/b/d/f (284 aa).

The stretch at 1-284 (MDAIKKKMQA…DSTFQELSGY (284 aa)) forms a coiled coil. The interval 40–78 (EEELRDTQKKMTQTGDDLDKAQEDLSAATSKLEEKEKTV) is disordered.

Belongs to the tropomyosin family. In terms of tissue distribution, isoform a and isoform d are expressed in body wall muscles, vulva, anus muscles and male tail muscles. Located to the myofibrils of thin actin filaments.

It is found in the cytoplasm. The protein localises to the myofibril. The protein resides in the sarcomere. Its subcellular location is the i band. In terms of biological role, tropomyosin, in association with the troponin complex, plays a central role in the calcium dependent regulation of muscle contraction. Involved in muscle actin filament organization and muscle arm extension and morphology. Protects actin filaments from depolymerization by unc-60 in vitro. Also has a role in male mating behavior by regulating the copulatory spicules. Binds to F-actin. This chain is Tropomyosin isoforms a/b/d/f (lev-11), found in Caenorhabditis elegans.